The chain runs to 561 residues: Putative transport protein KPK_3686 (561 aa).

5 helical membrane passes run 8-28 (LLNG…LCLG), 37-57 (LGNS…HFAI), 66-86 (FMLF…SIFF), 94-114 (MLAL…GKVF), and 158-178 (HLSL…IVGA). RCK C-terminal domains follow at residues 202 to 288 (LDTD…SFRN) and 292 to 373 (VFDR…RIGF). A run of 5 helical transmembrane segments spans residues 383–403 (LLAF…TFQF), 406–426 (FSFG…LGFL), 447–467 (FGLM…INNG), 478–498 (AGLI…AYVL), and 540–560 (AIAN…WPGL).

The protein belongs to the AAE transporter (TC 2.A.81) family. YbjL subfamily.

It localises to the cell membrane. The chain is Putative transport protein KPK_3686 from Klebsiella pneumoniae (strain 342).